Consider the following 103-residue polypeptide: Host transcription reprogramming factor 6 (103 aa).

An N-terminal signal peptide occupies residues 1 to 19; the sequence is MRATTAFQVIAFLAVGAAA. The C2H2-type zinc finger occupies 66-92; that stretch reads YWCPNQVCAKTFATQEERDHHIANTVH. The interval 82-103 is disordered; sequence ERDHHIANTVHPTNSKRDVLLQ.

The protein resides in the secreted. Its subcellular location is the host nucleus. In terms of biological role, probable secreted effector that translocates into the nuclei of host cells to reprogram the expression of targeted genes by binding on effector binding elements in rice. This Pyricularia oryzae (strain 70-15 / ATCC MYA-4617 / FGSC 8958) (Rice blast fungus) protein is Host transcription reprogramming factor 6.